The chain runs to 68 residues: Protein SlyX homolog (68 aa).

This sequence belongs to the SlyX family.

This chain is Protein SlyX homolog, found in Pseudomonas syringae pv. tomato (strain ATCC BAA-871 / DC3000).